The following is a 130-amino-acid chain: Small ribosomal subunit protein uS9 (130 aa).

Positions 98 to 130 (LKRAGLLTRDPRMKERKKPGLKKARRSPQFSKR) are disordered. The span at 111-130 (KERKKPGLKKARRSPQFSKR) shows a compositional bias: basic residues.

The protein belongs to the universal ribosomal protein uS9 family.

The sequence is that of Small ribosomal subunit protein uS9 (rpsI) from Staphylococcus carnosus (strain TM300).